The primary structure comprises 504 residues: Cytochrome P450 3A2 (504 aa).

Cys-443 is a heme binding site.

This sequence belongs to the cytochrome P450 family. Heme is required as a cofactor. As to expression, expressed in liver.

The protein localises to the endoplasmic reticulum membrane. Its subcellular location is the microsome membrane. It carries out the reaction an organic molecule + reduced [NADPH--hemoprotein reductase] + O2 = an alcohol + oxidized [NADPH--hemoprotein reductase] + H2O + H(+). Its function is as follows. Cytochromes P450 are a group of heme-thiolate monooxygenases. In liver microsomes, this enzyme is involved in an NADPH-dependent electron transport pathway. It oxidizes a variety of structurally unrelated compounds, including steroids, fatty acids, and xenobiotics. In Rattus norvegicus (Rat), this protein is Cytochrome P450 3A2 (Cyp3a2).